We begin with the raw amino-acid sequence, 593 residues long: Ribonuclease Y (593 aa).

The chain crosses the membrane as a helical span at residues 6 to 26 (ILLMYLIVGLLTALTVLIFVF). The KH domain occupies 218-278 (DPIKVKKVTD…IKLEVAYNAL (61 aa)). In terms of domain architecture, HD spans 354 to 464 (VLTHSIEAAQ…TKIADFLSAA (111 aa)).

It belongs to the RNase Y family.

Its subcellular location is the cell membrane. Functionally, endoribonuclease that initiates mRNA decay. This chain is Ribonuclease Y, found in Mycoplasmoides gallisepticum (strain R(low / passage 15 / clone 2)) (Mycoplasma gallisepticum).